Reading from the N-terminus, the 703-residue chain is Glycine--tRNA ligase beta subunit (703 aa).

The protein belongs to the class-II aminoacyl-tRNA synthetase family. In terms of assembly, tetramer of two alpha and two beta subunits.

Its subcellular location is the cytoplasm. The catalysed reaction is tRNA(Gly) + glycine + ATP = glycyl-tRNA(Gly) + AMP + diphosphate. This Myxococcus xanthus (strain DK1622) protein is Glycine--tRNA ligase beta subunit.